The chain runs to 122 residues: uncharacterized protein (122 aa).

Residues 46–116 (KDLQKEVDDL…HQLENKRELN (71 aa)) are a coiled coil.

This is an uncharacterized protein from Invertebrate iridescent virus 6 (IIV-6).